The sequence spans 662 residues: MSENPVKRPGKDGSRNKFKPVQEEGGTPGWFRSKGESPQGKFPGFLLFLMAGLLMLFVFLRFFSGTDAPEITYNEYKSVLSRALVTEVTVKTYEDKSAILSGKLNAPAQLQLIDKTTLQTNRFAVRVPSFTLEQADMLTEKGVRLKVEKGSSDLNTFLALFAPWIIFAALYFFLFRRMSGQNGAQAKNIFSFGKSRAKMVSEFEVKTTFKDVAGVDEAIEELQETVEFLTNPEKFQKIGGKIPKGVLLLGPPGTGKTLLAKAIAGEAKVPFFSISGADFVEMFVGVGAARVRDLFEQAKKNAPCIIFIDEIDAVGRSRGAGLGGGHDEREQTLNQLLVEMDGFTTNENVILIAATNRPDVLDSALLRPGRFDRQITIDKPDIRGREAILKIHTRNTPLDGDVDITVLAKSSPGFSGADLANLVNEAALLAARHEQVLITAVNFEQARDKILMGPERRSMFISDEQKKLTAYHEAGHVLVSIHTKGSDPIHKVTIIPRGRSLGLTAYLPLEDRYTHNREYLLAMITYALGGRVAEELVFQECSTGAANDIEKATDIARRMVRQWGMSESLGPINYGDSHKEVFLGKDYSHIREYSEETALQIDVEVRNIIMGCMENAKTVLSEQLAVLHRLAGILIEKESLNAREIQEITGPGQGALPNPVTA.

Residues 1–15 are compositionally biased toward basic and acidic residues; sequence MSENPVKRPGKDGSR. The interval 1–35 is disordered; sequence MSENPVKRPGKDGSRNKFKPVQEEGGTPGWFRSKG. Topologically, residues 1–39 are cytoplasmic; it reads MSENPVKRPGKDGSRNKFKPVQEEGGTPGWFRSKGESPQ. A helical transmembrane segment spans residues 40–60; sequence GKFPGFLLFLMAGLLMLFVFL. At 61–154 the chain is on the periplasmic side; the sequence is RFFSGTDAPE…LKVEKGSSDL (94 aa). A helical membrane pass occupies residues 155–175; it reads NTFLALFAPWIIFAALYFFLF. Over 176–662 the chain is Cytoplasmic; the sequence is RRMSGQNGAQ…QGALPNPVTA (487 aa). 250-257 provides a ligand contact to ATP; it reads GPPGTGKT. His-472 serves as a coordination point for Zn(2+). Residue Glu-473 is part of the active site. Zn(2+)-binding residues include His-476 and Asp-548.

In the central section; belongs to the AAA ATPase family. This sequence in the C-terminal section; belongs to the peptidase M41 family. In terms of assembly, homohexamer. The cofactor is Zn(2+).

It localises to the cell inner membrane. Functionally, acts as a processive, ATP-dependent zinc metallopeptidase for both cytoplasmic and membrane proteins. Plays a role in the quality control of integral membrane proteins. The polypeptide is ATP-dependent zinc metalloprotease FtsH (Pelodictyon phaeoclathratiforme (strain DSM 5477 / BU-1)).